We begin with the raw amino-acid sequence, 356 residues long: C-C chemokine receptor type 8 (356 aa).

The Extracellular segment spans residues M1–K35. A helical membrane pass occupies residues L36–C63. The Cytoplasmic segment spans residues K64–Y73. A helical membrane pass occupies residues L74–Y93. At Y94–K107 the chain is on the extracellular side. C106 and C184 are disulfide-bonded. Residues V108–V129 form a helical membrane-spanning segment. The Cytoplasmic portion of the chain corresponds to D130 to T146. The helical transmembrane segment at I147–F172 threads the bilayer. The Extracellular segment spans residues Y173–M203. Residues N204 to L223 form a helical membrane-spanning segment. The Cytoplasmic segment spans residues H224–R239. The helical transmembrane segment at L240 to L264 threads the bilayer. At H265 to Y281 the chain is on the extracellular side. Residues A282–G305 form a helical membrane-spanning segment. Topologically, residues E306–L356 are cytoplasmic.

Belongs to the G-protein coupled receptor 1 family.

The protein resides in the cell membrane. Its function is as follows. Receptor for the chemokines CCL1/SCYA1/I-309. May regulate monocyte chemotaxis and thymic cell line apoptosis. The polypeptide is C-C chemokine receptor type 8 (CCR8) (Macaca mulatta (Rhesus macaque)).